The chain runs to 251 residues: Imidazole glycerol phosphate synthase subunit HisF (251 aa).

Catalysis depends on residues Asp-11 and Asp-130.

This sequence belongs to the HisA/HisF family. As to quaternary structure, heterodimer of HisH and HisF.

The protein localises to the cytoplasm. It carries out the reaction 5-[(5-phospho-1-deoxy-D-ribulos-1-ylimino)methylamino]-1-(5-phospho-beta-D-ribosyl)imidazole-4-carboxamide + L-glutamine = D-erythro-1-(imidazol-4-yl)glycerol 3-phosphate + 5-amino-1-(5-phospho-beta-D-ribosyl)imidazole-4-carboxamide + L-glutamate + H(+). The protein operates within amino-acid biosynthesis; L-histidine biosynthesis; L-histidine from 5-phospho-alpha-D-ribose 1-diphosphate: step 5/9. Functionally, IGPS catalyzes the conversion of PRFAR and glutamine to IGP, AICAR and glutamate. The HisF subunit catalyzes the cyclization activity that produces IGP and AICAR from PRFAR using the ammonia provided by the HisH subunit. This chain is Imidazole glycerol phosphate synthase subunit HisF, found in Thiobacillus denitrificans (strain ATCC 25259 / T1).